We begin with the raw amino-acid sequence, 302 residues long: 4-hydroxy-tetrahydrodipicolinate synthase (302 aa).

Residue threonine 55 participates in pyruvate binding. The active-site Proton donor/acceptor is the tyrosine 144. The active-site Schiff-base intermediate with substrate is the lysine 172. Valine 214 lines the pyruvate pocket.

Belongs to the DapA family. In terms of assembly, homotetramer; dimer of dimers.

The protein resides in the cytoplasm. The catalysed reaction is L-aspartate 4-semialdehyde + pyruvate = (2S,4S)-4-hydroxy-2,3,4,5-tetrahydrodipicolinate + H2O + H(+). Its pathway is amino-acid biosynthesis; L-lysine biosynthesis via DAP pathway; (S)-tetrahydrodipicolinate from L-aspartate: step 3/4. Its function is as follows. Catalyzes the condensation of (S)-aspartate-beta-semialdehyde [(S)-ASA] and pyruvate to 4-hydroxy-tetrahydrodipicolinate (HTPA). The sequence is that of 4-hydroxy-tetrahydrodipicolinate synthase from Prochlorococcus marinus (strain MIT 9313).